The chain runs to 90 residues: UPF0335 protein R02793 (90 aa).

This sequence belongs to the UPF0335 family.

In Rhizobium meliloti (strain 1021) (Ensifer meliloti), this protein is UPF0335 protein R02793.